Here is a 331-residue protein sequence, read N- to C-terminus: Probable allantoicase (331 aa).

Belongs to the allantoicase family.

The enzyme catalyses allantoate + H2O = (S)-ureidoglycolate + urea. It functions in the pathway nitrogen metabolism; (S)-allantoin degradation; (S)-ureidoglycolate from allantoate (aminidohydrolase route): step 1/1. The polypeptide is Probable allantoicase (Pseudomonas syringae pv. tomato (strain ATCC BAA-871 / DC3000)).